The primary structure comprises 334 residues: uncharacterized protein (334 aa).

2 consecutive transmembrane segments (helical) span residues 19–39 (AFLR…SFGI) and 55–75 (LIVL…AALF). Residues 308–334 (KPESKSSSQKSVETEIEKEVKDKLAKN) form a disordered region. The span at 319 to 334 (VETEIEKEVKDKLAKN) shows a compositional bias: basic and acidic residues.

The protein localises to the cell membrane. This is an uncharacterized protein from Mycoplasma genitalium (strain ATCC 33530 / DSM 19775 / NCTC 10195 / G37) (Mycoplasmoides genitalium).